Here is a 132-residue protein sequence, read N- to C-terminus: C-X-C motif chemokine 5 (132 aa).

The first 40 residues, 1–40 (MSLQLRSSARIPSGSISPFMRMAPLAFLLLFTLPQHLAEA), serve as a signal peptide directing secretion. Disulfide bonds link C53–C79 and C55–C95.

It belongs to the intercrine alpha (chemokine CxC) family. In terms of assembly, monomer. Homodimer. GCP-2(1-78) and GCP-2(9-78) are produced by proteolytic cleavage after secretion from fibroblasts and epithelial cells. GCP-2(9-78) is the most prominent form. A number of additional N-terminal (processed between pos. 41 and 48) and C-terminal (processed between pos. 118 and 132) processed forms have been identified, probably also representing intermediate states.

It localises to the secreted. In terms of biological role, may participate in the recruitment of inflammatory cells by injured or infected tissue. GCP-2(1-78) and, more potent, GCP-2(9-78) attract neutrophils and are involved in neutrophil activation. This Mus musculus (Mouse) protein is C-X-C motif chemokine 5 (Cxcl5).